The sequence spans 542 residues: Peptide chain release factor 3 (542 aa).

A tr-type G domain is found at 14 to 283 (ELRRNFAIIS…YFLEYALKPG (270 aa)). Residues 23-30 (SHPDAGKT), 91-95 (DTPGH), and 145-148 (NKLD) contribute to the GTP site.

It belongs to the TRAFAC class translation factor GTPase superfamily. Classic translation factor GTPase family. PrfC subfamily.

The protein localises to the cytoplasm. In terms of biological role, increases the formation of ribosomal termination complexes and stimulates activities of RF-1 and RF-2. It binds guanine nucleotides and has strong preference for UGA stop codons. It may interact directly with the ribosome. The stimulation of RF-1 and RF-2 is significantly reduced by GTP and GDP, but not by GMP. In Nostoc punctiforme (strain ATCC 29133 / PCC 73102), this protein is Peptide chain release factor 3.